The sequence spans 447 residues: Na(+)-translocating NADH-quinone reductase subunit A (447 aa).

This sequence belongs to the NqrA family. In terms of assembly, composed of six subunits; NqrA, NqrB, NqrC, NqrD, NqrE and NqrF.

The catalysed reaction is a ubiquinone + n Na(+)(in) + NADH + H(+) = a ubiquinol + n Na(+)(out) + NAD(+). Its function is as follows. NQR complex catalyzes the reduction of ubiquinone-1 to ubiquinol by two successive reactions, coupled with the transport of Na(+) ions from the cytoplasm to the periplasm. NqrA to NqrE are probably involved in the second step, the conversion of ubisemiquinone to ubiquinol. The chain is Na(+)-translocating NADH-quinone reductase subunit A from Haemophilus influenzae (strain ATCC 51907 / DSM 11121 / KW20 / Rd).